We begin with the raw amino-acid sequence, 507 residues long: Phospho-2-dehydro-3-deoxyheptonate aldolase 2, chloroplastic (507 aa).

This sequence belongs to the class-II DAHP synthase family.

It is found in the plastid. The protein localises to the chloroplast. The enzyme catalyses D-erythrose 4-phosphate + phosphoenolpyruvate + H2O = 7-phospho-2-dehydro-3-deoxy-D-arabino-heptonate + phosphate. It participates in metabolic intermediate biosynthesis; chorismate biosynthesis; chorismate from D-erythrose 4-phosphate and phosphoenolpyruvate: step 1/7. This chain is Phospho-2-dehydro-3-deoxyheptonate aldolase 2, chloroplastic (DHS2), found in Arabidopsis thaliana (Mouse-ear cress).